Consider the following 614-residue polypeptide: UvrABC system protein C (614 aa).

The GIY-YIG domain occupies 16–94 (SRPGVYRMFG…VKSLKPRFNV (79 aa)). The UVR domain maps to 204-239 (GELQKRLASEMEAASEAMEFETAARLRDRIRAIAHV).

It belongs to the UvrC family. In terms of assembly, interacts with UvrB in an incision complex.

The protein resides in the cytoplasm. In terms of biological role, the UvrABC repair system catalyzes the recognition and processing of DNA lesions. UvrC both incises the 5' and 3' sides of the lesion. The N-terminal half is responsible for the 3' incision and the C-terminal half is responsible for the 5' incision. The chain is UvrABC system protein C from Hyphomonas neptunium (strain ATCC 15444).